We begin with the raw amino-acid sequence, 378 residues long: Quinolinate synthase (378 aa).

Iminosuccinate is bound by residues His-59 and Ser-80. Residue Cys-125 participates in [4Fe-4S] cluster binding. Residues Tyr-151 to Asn-153 and Ser-168 each bind iminosuccinate. Cys-212 is a binding site for [4Fe-4S] cluster. Residues His-238–Glu-240 and Thr-255 contribute to the iminosuccinate site. A [4Fe-4S] cluster-binding site is contributed by Cys-309.

It belongs to the quinolinate synthase family. Type 1 subfamily. It depends on [4Fe-4S] cluster as a cofactor.

It is found in the cytoplasm. The enzyme catalyses iminosuccinate + dihydroxyacetone phosphate = quinolinate + phosphate + 2 H2O + H(+). It participates in cofactor biosynthesis; NAD(+) biosynthesis; quinolinate from iminoaspartate: step 1/1. In terms of biological role, catalyzes the condensation of iminoaspartate with dihydroxyacetone phosphate to form quinolinate. In Burkholderia pseudomallei (strain 668), this protein is Quinolinate synthase.